Here is a 409-residue protein sequence, read N- to C-terminus: Probable ferredoxin reductase CtmF (409 aa).

FAD-binding residues include A15, D37, K50, V83, D279, and V298.

This sequence belongs to the FAD-dependent oxidoreductase family. FAD serves as cofactor.

Its pathway is terpene metabolism; monoterpene degradation. Involved in the degradation of the cyclic monoterpene limonene. Probably part of an electron transfer system involved in the oxidation of limonene to perillyl alcohol. The protein is Probable ferredoxin reductase CtmF of Castellaniella defragrans (strain DSM 12143 / CCUG 39792 / 65Phen) (Alcaligenes defragrans).